The sequence spans 326 residues: Tetraacyldisaccharide 4'-kinase (326 aa).

55–62 contributes to the ATP binding site; that stretch reads TAGGNGKT.

It belongs to the LpxK family.

It carries out the reaction a lipid A disaccharide + ATP = a lipid IVA + ADP + H(+). Its pathway is glycolipid biosynthesis; lipid IV(A) biosynthesis; lipid IV(A) from (3R)-3-hydroxytetradecanoyl-[acyl-carrier-protein] and UDP-N-acetyl-alpha-D-glucosamine: step 6/6. Functionally, transfers the gamma-phosphate of ATP to the 4'-position of a tetraacyldisaccharide 1-phosphate intermediate (termed DS-1-P) to form tetraacyldisaccharide 1,4'-bis-phosphate (lipid IVA). The sequence is that of Tetraacyldisaccharide 4'-kinase from Erwinia tasmaniensis (strain DSM 17950 / CFBP 7177 / CIP 109463 / NCPPB 4357 / Et1/99).